The primary structure comprises 441 residues: COBRA-like protein 2 (441 aa).

Residues 1–28 form the signal peptide; it reads MNILFSRFSFLLLFLCSWTSFTFTTTEA. 9 N-linked (GlcNAc...) asparagine glycosylation sites follow: Asn37, Asn162, Asn170, Asn209, Asn234, Asn249, Asn314, Asn329, and Asn348. Asn417 carries GPI-anchor amidated asparagine lipidation. A propeptide spans 418 to 441 (removed in mature form); it reads ASPNIATSPFVILLITFLSVLILM.

This sequence belongs to the COBRA family. As to expression, expressed in roots, stems, leaves, flowers and siliques.

The protein localises to the cell membrane. The polypeptide is COBRA-like protein 2 (COBL2) (Arabidopsis thaliana (Mouse-ear cress)).